A 337-amino-acid chain; its full sequence is Casein kinase I isoform alpha (337 aa).

The 269-residue stretch at 20 to 288 (YRVIRKIGSG…YLRQLFRILF (269 aa)) folds into the Protein kinase domain. ATP is bound by residues 26-34 (IGSGSFGDI) and lysine 49. The Proton acceptor role is filled by aspartate 139.

Belongs to the protein kinase superfamily. CK1 Ser/Thr protein kinase family. Casein kinase I subfamily. Interacts with cos. Mg(2+) is required as a cofactor. Phosphorylated. The dephosphorylated kinase is active in the cytoplasm while the active kinase in the nucleus is phosphorylated.

It is found in the cytoplasm. The protein resides in the nucleus. It catalyses the reaction L-seryl-[protein] + ATP = O-phospho-L-seryl-[protein] + ADP + H(+). The enzyme catalyses L-threonyl-[protein] + ATP = O-phospho-L-threonyl-[protein] + ADP + H(+). Activity increases following DNA damage. In terms of biological role, casein kinases are operationally defined by their preferential utilization of acidic proteins such as caseins as substrates. Can phosphorylate a large number of proteins. Negative regulator of wg signaling. Phosphorylates arm directly or indirectly and stimulates its degradation which prevents inappropriate wg signaling. Phosphorylates smo which promotes its accumulation at the cell surface and its signaling activity in response to hh. Together with dco, regulates proteolytic processing of ci by phosphorylating it, which promotes its binding to slmb, the F-box recognition component of the SCF(slmb) E3 ubiquitin-protein ligase required for ci processing. Inhibits condensin II interphase activity by promoting degradation of the Cap-H2 regulatory subunit and limiting the levels of chromatin-bound Cap-H2 which regulates interphase chromosome organization. The sequence is that of Casein kinase I isoform alpha (CkIalpha) from Drosophila melanogaster (Fruit fly).